We begin with the raw amino-acid sequence, 585 residues long: MTSINEQLTNYFIQALVKAFGAEFSDIDPIVVPASNPKFGDYQANIALSLAKKLGEQPRAIAQKIIDNLSLEDLGELPTIAGPGFINIKIKPTYLATQLKVQQNSSSLGVTKADPIEKIIVDFSSPNIAKEMHVGHLRSTIIGDCIARILEVRGHQVLRLNHVGDWGTQFGMLIAYLAEVYPDALTTADALDIGDLVTFYKQAKKRFDEDEKFQETARNQVVKLQAGDSQTRHAWQLLCEQSRREFQVIYDILDINITERGESFYNPLLEDIIKELDHQGLLKKDAGAQCVFLDGFTNKSGDPLPLIVQKSDGGYNYATTDLAALKYRITQDQAERIIYVTDAGQANHFAQVFQVAKKAHIIPKNVEIIHVPFGLVKGEDGKKLKTRSGTTIKLRDLLDEAVIYARQDLEKRLAEEGRQESEDFIANVSQVVGISAVKYADLSQNRTSDYIFSYDKMLALQGNTAPYMLYAYARIQSISREGNIDFESLQQEAKIILQEETEIELGKYLLQLSEVIEEVEKTLLPNRLCDYLYELSKKFNRFYENCPVLKSEEPLRTSRLLLCDLTARTLKLGLSLLGIPVLERM.

The 'HIGH' region signature appears at 126–136; that stretch reads PNIAKEMHVGH.

Belongs to the class-I aminoacyl-tRNA synthetase family. As to quaternary structure, monomer.

It is found in the cytoplasm. The catalysed reaction is tRNA(Arg) + L-arginine + ATP = L-arginyl-tRNA(Arg) + AMP + diphosphate. In Rippkaea orientalis (strain PCC 8801 / RF-1) (Cyanothece sp. (strain PCC 8801)), this protein is Arginine--tRNA ligase.